The sequence spans 147 residues: Hemoglobin subunit beta (147 aa).

Val2 carries the N-acetylvaline modification. The Globin domain maps to 3 to 147; the sequence is HLTGEEKSAV…VANALAHKYH (145 aa). Residue Thr13 is modified to Phosphothreonine. Ser45 carries the post-translational modification Phosphoserine. The residue at position 60 (Lys60) is an N6-acetyllysine. Heme b is bound at residue His64. Lys83 carries the post-translational modification N6-acetyllysine. His93 contacts heme b. S-nitrosocysteine is present on Cys94. Lys145 is subject to N6-acetyllysine.

This sequence belongs to the globin family. Heterotetramer of two alpha chains and two beta chains. Red blood cells.

Functionally, involved in oxygen transport from the lung to the various peripheral tissues. In Ateles paniscus (Black spider monkey), this protein is Hemoglobin subunit beta (HBB).